Reading from the N-terminus, the 244-residue chain is Ubiquitin carboxyl-terminal hydrolase mug105 (244 aa).

The Nucleophile role is filled by C42. The Proton acceptor role is filled by H165. The active site involves D183.

The protein belongs to the peptidase C78 family. ZUFSP subfamily.

It is found in the cytoplasm. The enzyme catalyses Thiol-dependent hydrolysis of ester, thioester, amide, peptide and isopeptide bonds formed by the C-terminal Gly of ubiquitin (a 76-residue protein attached to proteins as an intracellular targeting signal).. Deubiquitinase with endodeubiquitinase activity that preferentially cleaves 'Lys-48'-linked polyubiquitin chains. Shows only weak activity against 'Lys-63' and 'Lys-11'-linked chains. Has a role in meiosis. The polypeptide is Ubiquitin carboxyl-terminal hydrolase mug105 (mug105) (Schizosaccharomyces pombe (strain 972 / ATCC 24843) (Fission yeast)).